We begin with the raw amino-acid sequence, 159 residues long: UPF0262 protein RD1_1069 (159 aa).

It belongs to the UPF0262 family.

The sequence is that of UPF0262 protein RD1_1069 from Roseobacter denitrificans (strain ATCC 33942 / OCh 114) (Erythrobacter sp. (strain OCh 114)).